The chain runs to 149 residues: Large ribosomal subunit protein uL24 (149 aa).

Belongs to the universal ribosomal protein uL24 family. Part of the 50S ribosomal subunit.

In terms of biological role, one of two assembly initiator proteins, it binds directly to the 5'-end of the 23S rRNA, where it nucleates assembly of the 50S subunit. Its function is as follows. One of the proteins that surrounds the polypeptide exit tunnel on the outside of the subunit. The protein is Large ribosomal subunit protein uL24 of Nostoc sp. (strain PCC 7120 / SAG 25.82 / UTEX 2576).